A 369-amino-acid polypeptide reads, in one-letter code: Porin-like protein BUsg_347 (369 aa).

Residues 1–23 (MKNHKSLAILIPMLFAGSTAVNA) form the signal peptide.

This sequence belongs to the Gram-negative porin family. In terms of assembly, homotrimer.

Its subcellular location is the cell outer membrane. Its function is as follows. Forms pores that allow passive diffusion of small molecules across the membrane. The chain is Porin-like protein BUsg_347 from Buchnera aphidicola subsp. Schizaphis graminum (strain Sg).